The following is a 410-amino-acid chain: MVKSFRMKALIAGAAVAAAVSAGAVSDVPAAKVLQPTAAYAAETVFSQNNGASGFLPGRYDVQAMAPAMFNWSRESRFAGNTDGTLKWQNDIRTTPQNGAGAVIDGDGTVYLHSRDGEMKAFNPDGSVKWVTGNLGKTYTQSPVLGTNGVIYLASYDKKIYFIDKETGEILTTVPLSGGPSSETVIGSDGTLYFSTLDNYVHAIKPTSKSTWTERWKLKTNGVVSSVPVLAKNGTVYVGTYNYVFYAINSGTGQVKWSRTTSNAFKGYPVIDKDGNIYAGNQDGQLYAYTSTGSLKWTFPLNGFSSSSPAIDHNGNIYIGSGSGELFSISKNGDMNWSFYTDGPVRTAPLIDAKGTVYFGSDDMKVYAADANGNELWSYQTDSNVVSSPQLAEDGTLYIGSYTKLMAFGK.

The N-terminal stretch at 1 to 41 (MVKSFRMKALIAGAAVAAAVSAGAVSDVPAAKVLQPTAAYA) is a signal peptide.

Interacts with PcrA, Pdp, YclM, YkvL, YhcQ and YomL. The interaction with PcrA is not essential for cell viability or repair of UV-induced lesions.

Its subcellular location is the secreted. Increases the processivity of the PcrA helicase, but does not bind to DNA. This is an uncharacterized protein from Bacillus subtilis (strain 168).